The following is a 468-amino-acid chain: Aldehyde dehydrogenase family 3 member B1 (468 aa).

At Met1 the chain carries N-acetylmethionine. Position 188–193 (188–193 (GSPRVG)) interacts with NAD(+). Active-site residues include Glu210 and Cys244. Cys463 is lipidated: S-palmitoyl cysteine. Cys465 carries the post-translational modification Cysteine methyl ester. Cys465 carries the S-geranylgeranyl cysteine lipid modification. The propeptide at 466 to 468 (TLL) is removed in mature form.

Belongs to the aldehyde dehydrogenase family. Dually lipidated in the C-terminus; prenylation occurs prior to, and is a prerequisite for palmitoylation. It is also required for activity towards long-chain substrates. In terms of tissue distribution, highest expression in kidney and lung.

The protein localises to the cell membrane. It catalyses the reaction an aldehyde + NADP(+) + H2O = a carboxylate + NADPH + 2 H(+). It carries out the reaction an aldehyde + NAD(+) + H2O = a carboxylate + NADH + 2 H(+). The enzyme catalyses a long-chain fatty aldehyde + NAD(+) + H2O = a long-chain fatty acid + NADH + 2 H(+). The catalysed reaction is a medium-chain fatty aldehyde + NAD(+) + H2O = a medium-chain fatty acid + NADH + 2 H(+). It catalyses the reaction octanal + NAD(+) + H2O = octanoate + NADH + 2 H(+). It carries out the reaction nonanal + NAD(+) + H2O = nonanoate + NADH + 2 H(+). The enzyme catalyses hexadecanoate + NADH + 2 H(+) = hexadecanal + NAD(+) + H2O. The catalysed reaction is (2E)-octenal + NAD(+) + H2O = (2E)-octenoate + NADH + 2 H(+). It catalyses the reaction (E)-non-2-enal + NAD(+) + H2O = (E)-non-2-enoate + NADH + 2 H(+). It carries out the reaction (E)-4-hydroxynon-2-enal + NAD(+) + H2O = (E)-4-hydroxynon-2-enoate + NADH + 2 H(+). The enzyme catalyses (2E)-hexadecenal + NAD(+) + H2O = (E)-hexadec-2-enoate + NADH + 2 H(+). The catalysed reaction is benzaldehyde + NAD(+) + H2O = benzoate + NADH + 2 H(+). It catalyses the reaction a medium-chain fatty aldehyde + NADP(+) + H2O = a medium-chain fatty acid + NADPH + 2 H(+). It carries out the reaction hexanal + NADP(+) + H2O = hexanoate + NADPH + 2 H(+). The enzyme catalyses octanal + NADP(+) + H2O = octanoate + NADPH + 2 H(+). The catalysed reaction is nonanal + NADP(+) + H2O = nonanoate + NADPH + 2 H(+). It catalyses the reaction (2E)-octenal + NADP(+) + H2O = (2E)-octenoate + NADPH + 2 H(+). It carries out the reaction (E)-non-2-enal + NADP(+) + H2O = (E)-non-2-enoate + NADPH + 2 H(+). The enzyme catalyses (E)-4-hydroxynon-2-enal + NADP(+) + H2O = (E)-4-hydroxynon-2-enoate + NADPH + 2 H(+). The catalysed reaction is benzaldehyde + NADP(+) + H2O = benzoate + NADPH + 2 H(+). The protein operates within alcohol metabolism; ethanol degradation; acetate from ethanol: step 2/2. Oxidizes medium and long chain saturated and unsaturated fatty aldehydes generated in the plasma membrane into non-toxic fatty acids. May have a protective role against the cytotoxicity induced by lipid peroxidation. Short-chain fatty aldehydes are not good substrates. Can use both NADP(+) and NAD(+) as electron acceptor in vitro, however in vivo preference will depend on their tissue levels. Low activity towards acetaldehyde and 3,4-dihydroxyphenylacetaldehyde. Able to metabolize aromatic aldehydes such as benzaldehyde to their acid form. This chain is Aldehyde dehydrogenase family 3 member B1 (ALDH3B1), found in Homo sapiens (Human).